We begin with the raw amino-acid sequence, 341 residues long: Transmembrane protein 120A-A (341 aa).

Residues 1–131 (MLFNPTGLTE…KQSKFAYKDE (131 aa)) lie on the Cytoplasmic side of the membrane. Residue K129 coordinates CoA. A helical transmembrane segment spans residues 132–151 (YEKFKLYLTVLLLFFSFTCR). Over 152-157 (FLVSYR) the chain is Extracellular. A helical membrane pass occupies residues 158–176 (VVDALFNFLLVWYYCTLTI). The Cytoplasmic portion of the chain corresponds to 177-189 (RESILINNGSKIK). CoA contacts are provided by S186 and K187. Residues 190–208 (GWWVFQHYVSTFLSGVMLT) traverse the membrane as a helical segment. Topologically, residues 209 to 217 (WPDGELYQM) are extracellular. Residues 218–239 (FRNQFLSYSMYINFVQFFQYYY) form a helical membrane-spanning segment. Residues Q236, Y239, Q240, and H282 each contribute to the CoA site. Residues 240 to 269 (QSGCLYRLRALGERHNMDLTVEGFQSWMWR) are Cytoplasmic-facing. The helical transmembrane segment at 270–293 (GLTFLLPFLFLGHFFQLYNGITLF) threads the bilayer. The Extracellular segment spans residues 294–303 (QMTQLPEWKE). The helical transmembrane segment at 304-329 (WQVLMCGSTFLVLFMGNFFTTLGVVY) threads the bilayer. Over 330 to 341 (HKYMDQDKAKGL) the chain is Cytoplasmic. K331 contacts CoA.

It belongs to the TMEM120 family. As to quaternary structure, homodimer.

The protein resides in the cell membrane. It is found in the nucleus inner membrane. It localises to the endoplasmic reticulum. Its function is as follows. Multifunctional protein involved in mechanosensation, and plays an essential role in lipid metabolism. May function as a potential ion channel involved in sensing mechanical stimuli. TMEM120A is structurally similar to a lipid-modifying enzyme, ELOVL7, and contains a bound coenzyme A molecule, which suggests it might function as an enzyme in lipid metabolism. The polypeptide is Transmembrane protein 120A-A (tmem120aa) (Danio rerio (Zebrafish)).